We begin with the raw amino-acid sequence, 103 residues long: Large ribosomal subunit protein uL24 (103 aa).

It belongs to the universal ribosomal protein uL24 family. As to quaternary structure, part of the 50S ribosomal subunit.

One of two assembly initiator proteins, it binds directly to the 5'-end of the 23S rRNA, where it nucleates assembly of the 50S subunit. In terms of biological role, one of the proteins that surrounds the polypeptide exit tunnel on the outside of the subunit. This is Large ribosomal subunit protein uL24 from Synechococcus sp. (strain CC9311).